Reading from the N-terminus, the 410-residue chain is Serine hydroxymethyltransferase (410 aa).

Residues Leu-119 and 123-125 (GHL) each bind (6S)-5,6,7,8-tetrahydrofolate. The residue at position 228 (Lys-228) is an N6-(pyridoxal phosphate)lysine. 351–353 (SPF) is a (6S)-5,6,7,8-tetrahydrofolate binding site.

Belongs to the SHMT family. Homodimer. The cofactor is pyridoxal 5'-phosphate.

Its subcellular location is the cytoplasm. The enzyme catalyses (6R)-5,10-methylene-5,6,7,8-tetrahydrofolate + glycine + H2O = (6S)-5,6,7,8-tetrahydrofolate + L-serine. The protein operates within one-carbon metabolism; tetrahydrofolate interconversion. It functions in the pathway amino-acid biosynthesis; glycine biosynthesis; glycine from L-serine: step 1/1. Functionally, catalyzes the reversible interconversion of serine and glycine with tetrahydrofolate (THF) serving as the one-carbon carrier. This reaction serves as the major source of one-carbon groups required for the biosynthesis of purines, thymidylate, methionine, and other important biomolecules. Also exhibits THF-independent aldolase activity toward beta-hydroxyamino acids, producing glycine and aldehydes, via a retro-aldol mechanism. The chain is Serine hydroxymethyltransferase from Clostridium perfringens (strain 13 / Type A).